Here is a 425-residue protein sequence, read N- to C-terminus: Formyl-CoA:oxalate CoA-transferase (425 aa).

Residues 17-18 (QS), Arg38, 72-75 (LDTK), 96-98 (NFG), Arg104, and 136-139 (KVYE) contribute to the CoA site. Asp168 (nucleophile) is an active-site residue. 247–249 (GGQ) lines the substrate pocket.

The protein belongs to the CoA-transferase III family. Frc subfamily. As to quaternary structure, homodimer.

It carries out the reaction formyl-CoA + oxalate = oxalyl-CoA + formate. It participates in metabolic intermediate degradation; oxalate degradation; CO(2) and formate from oxalate: step 1/2. Involved in the catabolism of oxalate and in the adapatation to low pH via the induction of the oxalate-dependent acid tolerance response (ATR). Catalyzes the transfer of the CoA moiety from formyl-CoA to oxalate. This is Formyl-CoA:oxalate CoA-transferase from Rhodopseudomonas palustris (strain ATCC BAA-98 / CGA009).